The primary structure comprises 957 residues: Glycine dehydrogenase (decarboxylating) (957 aa).

K708 carries the post-translational modification N6-(pyridoxal phosphate)lysine.

This sequence belongs to the GcvP family. As to quaternary structure, the glycine cleavage system is composed of four proteins: P, T, L and H. It depends on pyridoxal 5'-phosphate as a cofactor.

The catalysed reaction is N(6)-[(R)-lipoyl]-L-lysyl-[glycine-cleavage complex H protein] + glycine + H(+) = N(6)-[(R)-S(8)-aminomethyldihydrolipoyl]-L-lysyl-[glycine-cleavage complex H protein] + CO2. The glycine cleavage system catalyzes the degradation of glycine. The P protein binds the alpha-amino group of glycine through its pyridoxal phosphate cofactor; CO(2) is released and the remaining methylamine moiety is then transferred to the lipoamide cofactor of the H protein. This chain is Glycine dehydrogenase (decarboxylating), found in Cronobacter sakazakii (strain ATCC BAA-894) (Enterobacter sakazakii).